A 53-amino-acid chain; its full sequence is Large ribosomal subunit protein uL30 (53 aa).

It belongs to the universal ribosomal protein uL30 family. In terms of assembly, part of the 50S ribosomal subunit.

This Deinococcus geothermalis (strain DSM 11300 / CIP 105573 / AG-3a) protein is Large ribosomal subunit protein uL30.